The following is a 373-amino-acid chain: MSEKKINLLDLDRKGLRALFTEMGEKPFRADQLMKWIYHFGVSDFDEMNNINKALRAKLNARCEIVAPEISSFQKSEDGTIKFAINVGQGQEVETVYIPEDDRATLCVSSQVGCALECTFCSTAQQGFNRNLTVSEIIGQVWRVADFIGFVKETGERPITNVVMMGMGEPLLNLKNVIPAMDIMLDDFGFSLSKRRVTVSTSGVVPALDKLGDALDVALAVSIHAPNDELRDVLVPVNKKYPLEEFLGGIRRYIAKSNANRGRVTVEYVMLDHINDSTDQAHELAKLMKDTPCKINLIPFNPYPGSPYGRSSNSRIDRFSKVLMEYGLTVIVRKTRGDDIDAACGQLAGDIRDRTKRLAKKRMQDSQISVTIN.

Glutamate 94 functions as the Proton acceptor in the catalytic mechanism. A Radical SAM core domain is found at 100 to 339; sequence EDDRATLCVS…VIVRKTRGDD (240 aa). Cysteine 107 and cysteine 344 are disulfide-bonded. Cysteine 114, cysteine 118, and cysteine 121 together coordinate [4Fe-4S] cluster. S-adenosyl-L-methionine is bound by residues 168–169, serine 200, 222–224, and asparagine 301; these read GE and SIH. Residue cysteine 344 is the S-methylcysteine intermediate of the active site.

It belongs to the radical SAM superfamily. RlmN family. Requires [4Fe-4S] cluster as cofactor.

It localises to the cytoplasm. It carries out the reaction adenosine(2503) in 23S rRNA + 2 reduced [2Fe-2S]-[ferredoxin] + 2 S-adenosyl-L-methionine = 2-methyladenosine(2503) in 23S rRNA + 5'-deoxyadenosine + L-methionine + 2 oxidized [2Fe-2S]-[ferredoxin] + S-adenosyl-L-homocysteine. It catalyses the reaction adenosine(37) in tRNA + 2 reduced [2Fe-2S]-[ferredoxin] + 2 S-adenosyl-L-methionine = 2-methyladenosine(37) in tRNA + 5'-deoxyadenosine + L-methionine + 2 oxidized [2Fe-2S]-[ferredoxin] + S-adenosyl-L-homocysteine. In terms of biological role, specifically methylates position 2 of adenine 2503 in 23S rRNA and position 2 of adenine 37 in tRNAs. m2A2503 modification seems to play a crucial role in the proofreading step occurring at the peptidyl transferase center and thus would serve to optimize ribosomal fidelity. In Shewanella woodyi (strain ATCC 51908 / MS32), this protein is Dual-specificity RNA methyltransferase RlmN.